The following is a 134-amino-acid chain: Rubredoxin-2 (134 aa).

In terms of domain architecture, Rubredoxin-like spans 1-53 (MAKYQCPDCQYIYDECKGEPHEGFQPNTNWGEIPEEWACPDCAVRDKIDFKML). Cysteine 6, cysteine 9, cysteine 39, and cysteine 42 together coordinate Fe cation. A compositionally biased stretch (basic and acidic residues) spans 99-116 (SITDERENTPDNKVERRS). The segment at 99 to 134 (SITDERENTPDNKVERRSQSQAVRRSSVKKIKNNKR) is disordered. Over residues 124–134 (SSVKKIKNNKR) the composition is skewed to basic residues.

It belongs to the rubredoxin family. Fe(3+) is required as a cofactor.

It localises to the cytoplasm. The protein operates within hydrocarbon metabolism; alkane degradation. Functionally, involved in the hydrocarbon hydroxylating system, which transfers electrons from NADH to rubredoxin reductase and then through rubredoxin to alkane 1 monooxygenase. This Pseudomonas putida (Arthrobacter siderocapsulatus) protein is Rubredoxin-2 (alkF).